Consider the following 128-residue polypeptide: MARVKRAVNAHKKRRTMLERASGYRGQRSRLYRKAKEQMLHSFTYNYQHRHKRKGDFRRLWITRINAAARANGMTYNRFMQGLKLAGVEVDRRMLAEIAVSDAATFAVLVKTAREALPADVNAPAASR.

It belongs to the bacterial ribosomal protein bL20 family.

Binds directly to 23S ribosomal RNA and is necessary for the in vitro assembly process of the 50S ribosomal subunit. It is not involved in the protein synthesizing functions of that subunit. The polypeptide is Large ribosomal subunit protein bL20 (Micrococcus luteus (strain ATCC 4698 / DSM 20030 / JCM 1464 / CCM 169 / CCUG 5858 / IAM 1056 / NBRC 3333 / NCIMB 9278 / NCTC 2665 / VKM Ac-2230) (Micrococcus lysodeikticus)).